The primary structure comprises 547 residues: Chaperonin GroEL 1 (547 aa).

ATP is bound by residues 30 to 33 (TLGP), lysine 51, 87 to 91 (DGTTT), glycine 415, and aspartate 496.

The protein belongs to the chaperonin (HSP60) family. In terms of assembly, forms a cylinder of 14 subunits composed of two heptameric rings stacked back-to-back. Interacts with the co-chaperonin GroES.

Its subcellular location is the cytoplasm. It catalyses the reaction ATP + H2O + a folded polypeptide = ADP + phosphate + an unfolded polypeptide.. Its function is as follows. Together with its co-chaperonin GroES, plays an essential role in assisting protein folding. The GroEL-GroES system forms a nano-cage that allows encapsulation of the non-native substrate proteins and provides a physical environment optimized to promote and accelerate protein folding. This Rhodopseudomonas palustris (strain BisB18) protein is Chaperonin GroEL 1.